The following is a 226-amino-acid chain: PKHD-type hydroxylase BP3529 (226 aa).

The Fe2OG dioxygenase domain maps to 78–178 (KIFPPLFNRY…RISAFFWLQS (101 aa)). Residues H96, D98, and H159 each contribute to the Fe cation site. R169 serves as a coordination point for 2-oxoglutarate.

The cofactor is Fe(2+). Requires L-ascorbate as cofactor.

This Bordetella pertussis (strain Tohama I / ATCC BAA-589 / NCTC 13251) protein is PKHD-type hydroxylase BP3529.